The primary structure comprises 96 residues: Cell division topological specificity factor (96 aa).

This sequence belongs to the MinE family.

Prevents the cell division inhibition by proteins MinC and MinD at internal division sites while permitting inhibition at polar sites. This ensures cell division at the proper site by restricting the formation of a division septum at the midpoint of the long axis of the cell. This is Cell division topological specificity factor from Nitrosococcus oceani (strain ATCC 19707 / BCRC 17464 / JCM 30415 / NCIMB 11848 / C-107).